The sequence spans 701 residues: MSQFVLEIGFEELPSRFLPGLERELAERFARALDDDGVEHESIRVLTTPRRAAVLIEGINPVQREAEEVVPGPPVRVAFDAEGKPTKAAEGFARTQGVDMADIFTLSTDKGEYIAVRKRTGGANAADLIATACPTVVAALPFPKRMRWGSGDFTFGRPLRWLLALFDDAVVPFEVGGVVSGGVTWGHRIHGAGPLVVKSADDYLNVVIEKGGVTPDPAERRAMILAGGNAAAEAAGGRILWKESLLDEVQGLAEHPVPLLGDIDPSFLELPREVLLTSMESHQKSFGVEGPDGALLPHFLTVLNLTPLDVALVKKGWERVLRARLEDGRFFWKTDLAASFDAWLAELDNVIFLGPLGSMGDKTRRLEKLCAWLAKAAGVADESACARAGRLSKADLVSEMVGEFDTLQGIMGGIYARRMGEPETVAAALAEQYLPAGPDSPVPATLAGALLSIADKADTMAGCFGLGMIPTGAADPYALRRCALGIARIVLEHGLRIDVRELFRTALALYGERAWKLAPAEALVKLEEFFMARLKNHFMAAGHETLLVEAALAADTPEGAGIDVRAAGARLAALSDFSRRDDFGSAVLTFKRAANIIRKQGQEGGAVLDGAYSHALLAEDAEKALAARLEEVAPRFDALWAADDFASLFGLLGELRPAVDAFFDGVMVMCDDAAVRTNRLNLLKALTLRLGRLADFGALQM.

The protein belongs to the class-II aminoacyl-tRNA synthetase family. In terms of assembly, tetramer of two alpha and two beta subunits.

It localises to the cytoplasm. It carries out the reaction tRNA(Gly) + glycine + ATP = glycyl-tRNA(Gly) + AMP + diphosphate. The sequence is that of Glycine--tRNA ligase beta subunit from Nitratidesulfovibrio vulgaris (strain DSM 19637 / Miyazaki F) (Desulfovibrio vulgaris).